The primary structure comprises 661 residues: MNPDLRRERAAATFNPELITHLLDGSPEKTRRRREIENKILSDPDFQHENHNFLTRSERYEAAIKKSAVMVKKMREFGIADPDEIMWFKRLLLGNFVEPVGLNYSMFIPTLLNQGTTAQQEKWLHPSTGLQIIGTYAQTEMGHGTHLRGLETTATYDPKTQEFIINSPTVTSIKWWPGGLGKTSNHAIVLAQLITQGKCYGLHAFIVPIREIGTHKPLPGITVGDIGPKFGYEEMDNGYLKMDNYRIPRENMLMKYAQVKPDGTYVKPVSNKLTYGTMVFVRSFLVGAAAQSLSKACTIAIRYSAVRHQSEIKPGEPEPQVLDFQTQQYKLFPILATAYAFQFVGSYMKDTYHRINESIGQGDLSELPELHALTAGLKAFTTWTANAGIEECRLACGGHGYSHCSGIPNIYVTFTPACTFEGENTVMMLQTARFLMKVYDQVQSGKLVHGLVSYLNDLPSQRIQPQQVAVWPTVVDINNPDSLTEIYKLRAARLIDIAAKSLQGEMSHRKSKEVAWNLTSVGLVRATDAHCHYVVVKLFADKLLKIQDKTIQAVLRNLFLLYSLYGISQKAGDFLQGNIMTGSQITQVNQRVLELLAVIRPNAVALVDAFDYKDITLGSVLGRYDGNVYENLFEWAKKSPLNKTEVHESYHKYLKPLQSKL.

Position 26 is a phosphoserine (Ser26). Residue Lys65 is modified to N6-acetyllysine. The residue at position 89 (Lys89) is an N6-succinyllysine. Thr139 contributes to the FAD binding site. Lys159 carries the N6-succinyllysine modification. Gly178 serves as a coordination point for FAD. N6-acetyllysine is present on Lys216. The residue at position 241 (Lys241) is an N6-succinyllysine. Residues Lys255, Lys267, and Lys272 each carry the N6-acetyllysine modification. Lys349 is subject to N6-succinyllysine. The Proton acceptor role is filled by Glu421. An N6-acetyllysine; alternate mark is found at Lys437 and Lys446. An N6-succinyllysine; alternate mark is found at Lys437 and Lys446. Lys500 is modified (N6-acetyllysine). Lys512 is modified (N6-acetyllysine; alternate). Lys512 carries the N6-succinyllysine; alternate modification. At Lys542 the chain carries N6-succinyllysine. Position 637 is an N6-acetyllysine; alternate (Lys637). Lys637 is subject to N6-succinyllysine; alternate. Lys643 bears the N6-succinyllysine mark. Ser649 is subject to Phosphoserine. N6-acetyllysine is present on Lys652. At Lys655 the chain carries N6-succinyllysine. A Microbody targeting signal motif is present at residues 659–661 (SKL).

The protein belongs to the acyl-CoA oxidase family. Homodimer. Interacts with LONP2. The cofactor is FAD.

It is found in the peroxisome. It carries out the reaction a 2,3-saturated acyl-CoA + O2 = a (2E)-enoyl-CoA + H2O2. The catalysed reaction is hexadecanoyl-CoA + O2 = (2E)-hexadecenoyl-CoA + H2O2. The enzyme catalyses dodecanoyl-CoA + O2 = (2E)-dodecenoyl-CoA + H2O2. It catalyses the reaction octanoyl-CoA + O2 = (2E)-octenoyl-CoA + H2O2. It carries out the reaction decanoyl-CoA + O2 = (2E)-decenoyl-CoA + H2O2. The catalysed reaction is tetradecanoyl-CoA + O2 = (2E)-tetradecenoyl-CoA + H2O2. The enzyme catalyses hexadecanedioyl-CoA + O2 = (2E)-hexadecenedioyl-CoA + H2O2. It catalyses the reaction tetracosanoyl-CoA + O2 = (2E)-tetracosenoyl-CoA + H2O2. It carries out the reaction glutaryl-CoA + O2 = (2E)-glutaconyl-CoA + H2O2. The catalysed reaction is hexanoyl-CoA + O2 = (2E)-hexenoyl-CoA + H2O2. The enzyme catalyses octadecanoyl-CoA + O2 = (2E)-octadecenoyl-CoA + H2O2. It catalyses the reaction (5Z,8Z,11Z,14Z,17Z)-eicosapentaenoyl-CoA + O2 = (2E,5Z,8Z,11Z,14Z,17Z)-icosahexaenoyl-CoA + H2O2. It carries out the reaction (6Z,9Z,12Z,15Z,18Z,21Z)-tetracosahexaenoyl-CoA + O2 = (2E,6Z,9Z,12Z,15Z,18Z,21Z)-tetracosaheptaenoyl-CoA + H2O2. The protein operates within lipid metabolism; peroxisomal fatty acid beta-oxidation. Involved in the initial and rate-limiting step of peroxisomal beta-oxidation of straight-chain saturated and unsaturated very-long-chain fatty acids. Catalyzes the desaturation of fatty acyl-CoAs such as palmitoyl-CoA (hexadecanoyl-CoA) to 2-trans-enoyl-CoAs ((2E)-enoyl-CoAs) such as (2E)-hexadecenoyl-CoA, and donates electrons directly to molecular oxygen (O(2)), thereby producing hydrogen peroxide (H(2)O(2)). The chain is Peroxisomal acyl-coenzyme A oxidase 1 from Cavia porcellus (Guinea pig).